A 251-amino-acid chain; its full sequence is Adapter protein MecA (251 aa).

It belongs to the MecA family. Homodimer.

Enables the recognition and targeting of unfolded and aggregated proteins to the ClpC protease or to other proteins involved in proteolysis. This chain is Adapter protein MecA, found in Streptococcus agalactiae serotype Ia (strain ATCC 27591 / A909 / CDC SS700).